We begin with the raw amino-acid sequence, 45 residues long: MRNTPFVVKINVIFLKVISNTAVSVFCRDRRIRFESDWLNSYFQK.

Belongs to the asfivirus C62L family.

This is an uncharacterized protein from Ornithodoros (relapsing fever ticks).